Reading from the N-terminus, the 357-residue chain is UDP-N-acetylglucosamine--N-acetylmuramyl-(pentapeptide) pyrophosphoryl-undecaprenol N-acetylglucosamine transferase (357 aa).

UDP-N-acetyl-alpha-D-glucosamine contacts are provided by residues 12–14, Asn-124, Arg-163, Ser-191, Ile-245, 264–269, and Gln-290; these read TGG and ALTVSE.

It belongs to the glycosyltransferase 28 family. MurG subfamily.

It localises to the cell inner membrane. The enzyme catalyses di-trans,octa-cis-undecaprenyl diphospho-N-acetyl-alpha-D-muramoyl-L-alanyl-D-glutamyl-meso-2,6-diaminopimeloyl-D-alanyl-D-alanine + UDP-N-acetyl-alpha-D-glucosamine = di-trans,octa-cis-undecaprenyl diphospho-[N-acetyl-alpha-D-glucosaminyl-(1-&gt;4)]-N-acetyl-alpha-D-muramoyl-L-alanyl-D-glutamyl-meso-2,6-diaminopimeloyl-D-alanyl-D-alanine + UDP + H(+). Its pathway is cell wall biogenesis; peptidoglycan biosynthesis. Cell wall formation. Catalyzes the transfer of a GlcNAc subunit on undecaprenyl-pyrophosphoryl-MurNAc-pentapeptide (lipid intermediate I) to form undecaprenyl-pyrophosphoryl-MurNAc-(pentapeptide)GlcNAc (lipid intermediate II). The polypeptide is UDP-N-acetylglucosamine--N-acetylmuramyl-(pentapeptide) pyrophosphoryl-undecaprenol N-acetylglucosamine transferase (Nitrosospira multiformis (strain ATCC 25196 / NCIMB 11849 / C 71)).